The sequence spans 56 residues: UPF0434 protein Sden_2197 (56 aa).

This sequence belongs to the UPF0434 family.

The chain is UPF0434 protein Sden_2197 from Shewanella denitrificans (strain OS217 / ATCC BAA-1090 / DSM 15013).